Reading from the N-terminus, the 1062-residue chain is Inactive tyrosine-protein kinase 7 (1062 aa).

Positions Met-1–Ala-22 are cleaved as a signal peptide. Ig-like C2-type domains follow at residues Ala-23–Asn-112, Pro-120–Ser-210, Ala-217–Leu-309, Pro-301–Thr-399, Pro-404–Gln-489, Lys-495–Leu-578, and Gly-570–Leu-672. The Extracellular segment spans residues Ala-23 to Thr-696. Cys-45 and Cys-93 are oxidised to a cystine. 6 N-linked (GlcNAc...) asparagine glycosylation sites follow: Asn-98, Asn-108, Asn-176, Asn-206, Asn-260, and Asn-275. A disulfide bridge links Cys-142 with Cys-192. Intrachain disulfides connect Cys-238-Cys-293 and Cys-335-Cys-383. N-linked (GlcNAc...) asparagine glycans are attached at residues Asn-397, Asn-455, Asn-559, and Asn-638. Cystine bridges form between Cys-425/Cys-473, Cys-516/Cys-562, and Cys-605/Cys-656. The chain crosses the membrane as a helical span at residues Ile-697–Tyr-717. Over Cys-718 to Gln-1062 the chain is Cytoplasmic. Disordered regions lie at residues Gln-728–Gln-750 and Asn-1039–Gln-1062. Residues Ala-786 to Gln-1062 form an interaction with CTNNB1 region. Residues Leu-788–Ala-1058 form the Protein kinase; inactive domain. Ser-1056 carries the phosphoserine modification.

It belongs to the protein kinase superfamily. Tyr protein kinase family. Insulin receptor subfamily. In terms of assembly, interacts with CTNNB1. MMP14 cleaves PTK7 between Pro-613 and Leu-614 generating an N-terminal soluble (70 kDa) fragment and a membrane C-terminal (50 kDa) fragment. Proteolysis by MMP14 regulates PTK7 function in non-canonical Wnt signaling pathway. As to expression, expressed at high levels in lung and un-pregnant uterus among adult tissues, and in the tail, limbs, somites, gut and craniofacial regions among embryonic tissues.

It is found in the membrane. It localises to the cell junction. Its function is as follows. Inactive tyrosine kinase involved in Wnt signaling pathway. Component of both the non-canonical (also known as the Wnt/planar cell polarity signaling) and the canonical Wnt signaling pathway. Functions in cell adhesion, cell migration, cell polarity, proliferation, actin cytoskeleton reorganization and apoptosis. Has a role in embryogenesis, epithelial tissue organization and angiogenesis. This is Inactive tyrosine-protein kinase 7 (Ptk7) from Mus musculus (Mouse).